Here is a 297-residue protein sequence, read N- to C-terminus: MEEFDSEDFSTSEEDEDYVPSGGEYSEDDINELVKEDEVDGEEETQKTKGTKRKAESVLARKRKQGGLSLEEDEEDANEESGGSSSEEEDAATEQQKGVESEDARKKKEDELWASFLNDVGPKSKVPPSTHVKTGEETEETSSSHLVKAERLEKPKETEKVKITKVFDFAGEEVRVIKEVDATSKEAKSFFKQNEKEKPQSNVPPAVPSLPAGSGLKRSSGMSSLLGKIGAKKQKMSTLEKSKLDWESFKEEEGIGEELAIHNRGKEGYIERKAFLDRVDHRQFEIERDLRLSKMKP.

Composition is skewed to acidic residues over residues 1 to 18 (MEEFDSEDFSTSEEDEDY), 25 to 43 (YSEDDINELVKEDEVDGEE), and 70 to 79 (LEEDEEDANE). Disordered regions lie at residues 1–157 (MEEF…KPKE) and 190–222 (FFKQNEKEKPQSNVPPAVPSLPAGSGLKRSSGM). Phosphoserine is present on residues Ser81, Ser84, and Ser85. A compositionally biased stretch (basic and acidic residues) spans 97 to 111 (KGVESEDARKKKEDE). Ser115 carries the phosphoserine modification. 2 stretches are compositionally biased toward basic and acidic residues: residues 147-157 (VKAERLEKPKE) and 190-199 (FFKQNEKEKP). Lys148 is covalently cross-linked (Glycyl lysine isopeptide (Lys-Gly) (interchain with G-Cter in SUMO2)). The tract at residues 176 to 215 (VIKEVDATSKEAKSFFKQNEKEKPQSNVPPAVPSLPAGSG) is hydrophilic. Ser214 bears the Phosphoserine mark. The BCNT-C domain maps to 216–297 (LKRSSGMSSL…RDLRLSKMKP (82 aa)). N6-methyllysine is present on Lys217. Ser248 is modified (phosphoserine).

Brain.

May play a role during embryogenesis. In Bos taurus (Bovine), this protein is Craniofacial development protein 1 (CFDP1).